A 317-amino-acid chain; its full sequence is Inositol oxygenase 4 (317 aa).

Residues Arg58 and 115–117 contribute to the substrate site; that span reads DES. Positions 128, 153, and 154 each coordinate Fe cation. Substrate contacts are provided by residues Lys157 and 174–175; that span reads GD. Residues His226, His252, and Asp285 each contribute to the Fe cation site. Residue 252–253 participates in substrate binding; sequence HS.

This sequence belongs to the myo-inositol oxygenase family. Fe cation serves as cofactor. Expressed in flowers, leaves, siliques, and to a lesser extent in roots.

The protein localises to the cytoplasm. It catalyses the reaction myo-inositol + O2 = D-glucuronate + H2O + H(+). It participates in polyol metabolism; myo-inositol degradation into D-glucuronate; D-glucuronate from myo-inositol: step 1/1. Catalyzes the oxygenative cleavage of myo-inositol to D-glucuronate. Involved in the biosynthesis of UDP-glucuronic acid (UDP-GlcA), providing nucleotide sugars for cell-wall polymers. May be also involved in plant ascorbate biosynthesis. The protein is Inositol oxygenase 4 (MIOX4) of Arabidopsis thaliana (Mouse-ear cress).